An 806-amino-acid polypeptide reads, in one-letter code: Fibroblast growth factor receptor 3 (806 aa).

Residues 1–19 form the signal peptide; the sequence is MRAAWGSVWCLCLAAAVGA. Residues 20-364 lie on the Extracellular side of the membrane; it reads LPAARRRGAE…ELMEMDDSGS (345 aa). Residues 24 to 124 form the Ig-like C2-type 1 domain; sequence RRRGAERSGG…VLGNFTVRVT (101 aa). An intrachain disulfide couples Cys-61 to Cys-107. Asn-83, Asn-96, and Asn-118 each carry an N-linked (GlcNAc...) asparagine glycan. The segment at 121–146 is disordered; that stretch reads VRVTDSPSSGDDEDDDDESEDTGVPF. Over residues 130–141 the composition is skewed to acidic residues; the sequence is GDDEDDDDESED. 2 Ig-like C2-type domains span residues 150 to 238 and 247 to 349; these read PDKM…YQLD and PILQ…AWLT. Cys-170 and Cys-222 are oxidised to a cystine. Asn-219, Asn-256, Asn-288, Asn-309, and Asn-322 each carry an N-linked (GlcNAc...) asparagine glycan. A disulfide bridge links Cys-269 with Cys-333. The helical transmembrane segment at 365–389 threads the bilayer; sequence VYAGILSYGTGLVLFILVLVIVIIC. Over 390–806 the chain is Cytoplasmic; sequence RMKMPNKKAM…HVPCNGVIRT (417 aa). The region spanning 466–755 is the Protein kinase domain; the sequence is LTLGKPLGEG…LTMTSTDEYL (290 aa). ATP contacts are provided by residues 472-480 and Lys-502; that span reads LGEGCFGQV. Asp-611 acts as the Proton acceptor in catalysis. Residues Tyr-641, Tyr-642, Tyr-718, and Tyr-754 each carry the phosphotyrosine; by autocatalysis modification.

The protein belongs to the protein kinase superfamily. Tyr protein kinase family. Fibroblast growth factor receptor subfamily. As to quaternary structure, monomer. Homodimer after ligand binding. Post-translationally, autophosphorylated. Binding of FGF family members together with heparan sulfate proteoglycan or heparin promotes receptor dimerization and autophosphorylation on tyrosine residues. Autophosphorylation occurs in trans between the two FGFR molecules present in the dimer.

It localises to the cell membrane. It catalyses the reaction L-tyrosyl-[protein] + ATP = O-phospho-L-tyrosyl-[protein] + ADP + H(+). Present in an inactive conformation in the absence of bound ligand. Ligand binding leads to dimerization and activation by autophosphorylation on tyrosine residues. In terms of biological role, tyrosine-protein kinase that acts as a cell-surface receptor for fibroblast growth factors and plays an essential role in the regulation of cell proliferation, differentiation and apoptosis. Plays an essential role in the regulation of chondrocyte differentiation, proliferation and apoptosis, and is required for normal skeleton development. Regulates both osteogenesis and postnatal bone mineralization by osteoblasts. Promotes apoptosis in chondrocytes, but can also promote cancer cell proliferation. Phosphorylates PLCG1, CBL and FRS2. Ligand binding leads to the activation of several signaling cascades. Activation of PLCG1 leads to the production of the cellular signaling molecules diacylglycerol and inositol 1,4,5-trisphosphate. Phosphorylation of FRS2 triggers recruitment of GRB2, GAB1, PIK3R1 and SOS1, and mediates activation of RAS, MAPK1/ERK2, MAPK3/ERK1 and the MAP kinase signaling pathway, as well as of the AKT1 signaling pathway. The sequence is that of Fibroblast growth factor receptor 3 (FGFR3) from Gallus gallus (Chicken).